The sequence spans 408 residues: Argininosuccinate synthase (408 aa).

Residues 11–19 (AYSGGLDTS) and Ala38 each bind ATP. 2 residues coordinate L-citrulline: Tyr91 and Ser96. Gly121 contributes to the ATP binding site. 3 residues coordinate L-aspartate: Thr123, Asn127, and Asp128. Asn127 contributes to the L-citrulline binding site. The L-citrulline site is built by Arg131, Ser182, Ser191, Glu267, and Tyr279.

It belongs to the argininosuccinate synthase family. Type 1 subfamily. Homotetramer.

The protein localises to the cytoplasm. It catalyses the reaction L-citrulline + L-aspartate + ATP = 2-(N(omega)-L-arginino)succinate + AMP + diphosphate + H(+). It participates in amino-acid biosynthesis; L-arginine biosynthesis; L-arginine from L-ornithine and carbamoyl phosphate: step 2/3. The polypeptide is Argininosuccinate synthase (Azorhizobium caulinodans (strain ATCC 43989 / DSM 5975 / JCM 20966 / LMG 6465 / NBRC 14845 / NCIMB 13405 / ORS 571)).